A 195-amino-acid polypeptide reads, in one-letter code: Protein GrpE (195 aa).

Belongs to the GrpE family. As to quaternary structure, homodimer.

The protein localises to the cytoplasm. In terms of biological role, participates actively in the response to hyperosmotic and heat shock by preventing the aggregation of stress-denatured proteins, in association with DnaK and GrpE. It is the nucleotide exchange factor for DnaK and may function as a thermosensor. Unfolded proteins bind initially to DnaJ; upon interaction with the DnaJ-bound protein, DnaK hydrolyzes its bound ATP, resulting in the formation of a stable complex. GrpE releases ADP from DnaK; ATP binding to DnaK triggers the release of the substrate protein, thus completing the reaction cycle. Several rounds of ATP-dependent interactions between DnaJ, DnaK and GrpE are required for fully efficient folding. In Francisella tularensis subsp. holarctica (strain FTNF002-00 / FTA), this protein is Protein GrpE.